The primary structure comprises 906 residues: Alanine--tRNA ligase (906 aa).

4 residues coordinate Zn(2+): His-570, His-574, Cys-674, and His-678.

It belongs to the class-II aminoacyl-tRNA synthetase family. Zn(2+) serves as cofactor.

It localises to the cytoplasm. It carries out the reaction tRNA(Ala) + L-alanine + ATP = L-alanyl-tRNA(Ala) + AMP + diphosphate. Its function is as follows. Catalyzes the attachment of alanine to tRNA(Ala) in a two-step reaction: alanine is first activated by ATP to form Ala-AMP and then transferred to the acceptor end of tRNA(Ala). Also edits incorrectly charged Ser-tRNA(Ala) and Gly-tRNA(Ala) via its editing domain. The protein is Alanine--tRNA ligase of Ureaplasma parvum serovar 3 (strain ATCC 27815 / 27 / NCTC 11736).